Reading from the N-terminus, the 237-residue chain is Large ribosomal subunit protein uL1 (237 aa).

It belongs to the universal ribosomal protein uL1 family. In terms of assembly, part of the 50S ribosomal subunit.

Functionally, binds directly to 23S rRNA. The L1 stalk is quite mobile in the ribosome, and is involved in E site tRNA release. Its function is as follows. Protein L1 is also a translational repressor protein, it controls the translation of the L11 operon by binding to its mRNA. The protein is Large ribosomal subunit protein uL1 of Nocardia farcinica (strain IFM 10152).